The following is a 179-amino-acid chain: ATP synthase subunit delta (179 aa).

Belongs to the ATPase delta chain family. F-type ATPases have 2 components, F(1) - the catalytic core - and F(0) - the membrane proton channel. F(1) has five subunits: alpha(3), beta(3), gamma(1), delta(1), epsilon(1). F(0) has three main subunits: a(1), b(2) and c(10-14). The alpha and beta chains form an alternating ring which encloses part of the gamma chain. F(1) is attached to F(0) by a central stalk formed by the gamma and epsilon chains, while a peripheral stalk is formed by the delta and b chains.

The protein resides in the cell inner membrane. Functionally, f(1)F(0) ATP synthase produces ATP from ADP in the presence of a proton or sodium gradient. F-type ATPases consist of two structural domains, F(1) containing the extramembraneous catalytic core and F(0) containing the membrane proton channel, linked together by a central stalk and a peripheral stalk. During catalysis, ATP synthesis in the catalytic domain of F(1) is coupled via a rotary mechanism of the central stalk subunits to proton translocation. In terms of biological role, this protein is part of the stalk that links CF(0) to CF(1). It either transmits conformational changes from CF(0) to CF(1) or is implicated in proton conduction. The polypeptide is ATP synthase subunit delta (Burkholderia pseudomallei (strain 1710b)).